The following is a 429-amino-acid chain: Adenylosuccinate synthetase (429 aa).

Residues Gly12–Lys18 and Gly40–Thr42 each bind GTP. Asp13 (proton acceptor) is an active-site residue. Mg(2+)-binding residues include Asp13 and Gly40. IMP contacts are provided by residues Asp13–Lys16, Asn38–His41, Thr128, Arg142, Gln223, Thr238, and Arg302. The active-site Proton donor is the His41. Val298 to Arg304 contributes to the substrate binding site. GTP-binding positions include Arg304, Lys330 to Asp332, and Gly412 to Gly414.

Belongs to the adenylosuccinate synthetase family. Homodimer. Requires Mg(2+) as cofactor.

The protein resides in the cytoplasm. It carries out the reaction IMP + L-aspartate + GTP = N(6)-(1,2-dicarboxyethyl)-AMP + GDP + phosphate + 2 H(+). The protein operates within purine metabolism; AMP biosynthesis via de novo pathway; AMP from IMP: step 1/2. Its function is as follows. Plays an important role in the de novo pathway of purine nucleotide biosynthesis. Catalyzes the first committed step in the biosynthesis of AMP from IMP. This Corynebacterium jeikeium (strain K411) protein is Adenylosuccinate synthetase.